Consider the following 391-residue polypeptide: 3-demethoxyubiquinol 3-hydroxylase (391 aa).

This sequence belongs to the UbiH/COQ6 family. In terms of assembly, component of the Ubi complex metabolon, which regroups five ubiquinone biosynthesis proteins (UbiE, UbiF, UbiG, UbiH and UbiI) and two accessory factors (UbiK and the lipid-binding protein UbiJ). It depends on FAD as a cofactor.

Its subcellular location is the cytoplasm. It catalyses the reaction a 5-methoxy-2-methyl-3-(all-trans-polyprenyl)benzene-1,4-diol + AH2 + O2 = a 3-demethylubiquinol + A + H2O. The protein operates within cofactor biosynthesis; ubiquinone biosynthesis. Functionally, catalyzes the hydroxylation of 2-octaprenyl-3-methyl-6-methoxy-1,4-benzoquinol during ubiquinone biosynthesis. This chain is 3-demethoxyubiquinol 3-hydroxylase (ubiF), found in Escherichia coli (strain K12).